A 55-amino-acid chain; its full sequence is Large ribosomal subunit protein bL33B (55 aa).

This sequence belongs to the bacterial ribosomal protein bL33 family.

This chain is Large ribosomal subunit protein bL33B (rpmG2), found in Mycobacterium tuberculosis (strain CDC 1551 / Oshkosh).